Here is a 352-residue protein sequence, read N- to C-terminus: Phenylalanine--tRNA ligase alpha subunit (352 aa).

Glu258 lines the Mg(2+) pocket.

Belongs to the class-II aminoacyl-tRNA synthetase family. Phe-tRNA synthetase alpha subunit type 1 subfamily. Tetramer of two alpha and two beta subunits. Mg(2+) is required as a cofactor.

The protein resides in the cytoplasm. The enzyme catalyses tRNA(Phe) + L-phenylalanine + ATP = L-phenylalanyl-tRNA(Phe) + AMP + diphosphate + H(+). This Staphylococcus aureus (strain NCTC 8325 / PS 47) protein is Phenylalanine--tRNA ligase alpha subunit.